The sequence spans 413 residues: 2,3-diketo-5-methylthiopentyl-1-phosphate enolase (413 aa).

Residue K98 is the Proton acceptor of the active site. Substrate-binding positions include K147, 173 to 176 (KDDE), H264, G337, and 359 to 360 (GG). Mg(2+) is bound by residues K173, D175, and E176. The residue at position 173 (K173) is an N6-carboxylysine.

The protein belongs to the RuBisCO large chain family. Type IV subfamily. As to quaternary structure, homodimer. It depends on Mg(2+) as a cofactor.

It carries out the reaction 5-methylsulfanyl-2,3-dioxopentyl phosphate = 2-hydroxy-5-methylsulfanyl-3-oxopent-1-enyl phosphate. Its pathway is amino-acid biosynthesis; L-methionine biosynthesis via salvage pathway; L-methionine from S-methyl-5-thio-alpha-D-ribose 1-phosphate: step 3/6. Functionally, catalyzes the enolization of 2,3-diketo-5-methylthiopentyl-1-phosphate (DK-MTP-1-P) into 2-hydroxy-3-keto-5-methylthiopentenyl-1-phosphate (HK-MTPenyl-1-P). In Geobacillus thermodenitrificans (strain NG80-2), this protein is 2,3-diketo-5-methylthiopentyl-1-phosphate enolase.